Consider the following 578-residue polypeptide: L-ascorbate oxidase (578 aa).

Positions Met1–Ala28 are cleaved as a signal peptide. 2 Plastocyanin-like domains span residues Thr30 to Glu149 and Asp161 to Pro328. The Cu cation site is built by His87, His89, His131, and His133. 2 disulfide bridges follow: Cys108–Cys565 and Cys207–Cys221. The N-linked (GlcNAc...) asparagine glycan is linked to Asn206. Residues Asn349, Asn394, Asn438, and Asn451 are each glycosylated (N-linked (GlcNAc...) asparagine). Positions His372–Glu550 constitute a Plastocyanin-like 3 domain. Residues His472, His475, His477, His533, Cys534, His535, His539, and Met544 each contribute to the Cu cation site.

It belongs to the multicopper oxidase family. As to quaternary structure, dimer. It depends on Cu cation as a cofactor. In terms of tissue distribution, highly expressed in young and growing tissues.

The protein localises to the secreted. The catalysed reaction is 4 L-ascorbate + O2 = 4 monodehydro-L-ascorbate radical + 2 H2O. In terms of biological role, may be involved in a redox system involving ascorbic acid. The sequence is that of L-ascorbate oxidase (AAO) from Nicotiana tabacum (Common tobacco).